The sequence spans 465 residues: GDNF family receptor alpha-1 (465 aa).

The N-terminal stretch at 1 to 24 (MFLATLYFALPLLDLLLSAEVSGG) is a signal peptide. 3 tandem repeats follow at residues 25–113 (DRLD…LQGN), 150–238 (KGNN…YEER), and 239–342 (EKPN…KNAI). Cys-36 and Cys-42 form a disulfide bridge. An N-linked (GlcNAc...) asparagine glycan is attached at Asn-59. Intrachain disulfides connect Cys-154/Cys-214, Cys-161/Cys-167, Cys-178/Cys-192, Cys-187/Cys-233, Cys-216/Cys-221, Cys-243/Cys-313, Cys-250/Cys-256, Cys-267/Cys-285, Cys-277/Cys-337, and Cys-315/Cys-325. 2 N-linked (GlcNAc...) asparagine glycosylation sites follow: Asn-347 and Asn-406. Ser-429 carries the GPI-anchor amidated serine lipid modification. The propeptide at 430 to 465 (HITTKSMAAPPSCGLSPLLVLVVTALSTLLSLTETS) is removed in mature form.

The protein belongs to the GDNFR family. In terms of assembly, interacts with GDNF ligand and RET: forms a 2:2:2 ternary complex composed of GDNF ligand, GFRA1 and RET receptor. Interacts with SORL1, either alone or in complex with GDNF. Interaction between SORL1 and GFRA1 leads to GFRA1 internalization, but not degradation.

It localises to the cell membrane. Its subcellular location is the golgi apparatus. The protein resides in the trans-Golgi network. It is found in the endosome. The protein localises to the multivesicular body. Coreceptor for GDNF, a neurotrophic factor that enhances survival and morphological differentiation of dopaminergic neurons and increases their high-affinity dopamine uptake. GDNF-binding leads to autophosphorylation and activation of the RET receptor. This Homo sapiens (Human) protein is GDNF family receptor alpha-1 (GFRA1).